A 214-amino-acid chain; its full sequence is Cell division protein SepF (214 aa).

Residues Glu-25–Gly-51 are disordered.

The protein belongs to the SepF family. In terms of assembly, homodimer. Interacts with FtsZ.

The protein resides in the cytoplasm. Functionally, cell division protein that is part of the divisome complex and is recruited early to the Z-ring. Probably stimulates Z-ring formation, perhaps through the cross-linking of FtsZ protofilaments. Its function overlaps with FtsA. In Mycolicibacterium smegmatis (strain ATCC 700084 / mc(2)155) (Mycobacterium smegmatis), this protein is Cell division protein SepF.